The following is a 686-amino-acid chain: Acyl-CoA synthetase short-chain family member 3, mitochondrial (686 aa).

A mitochondrion-targeting transit peptide spans 1 to 29 (MKPSWLQCRKVTGAGGLGGSLPASSPARG). Residue 226–229 (EPGR) participates in CoA binding. Residues 424-426 (GER) and 445-450 (DHWWQT) contribute to the ATP site. Position 517 is an N6-succinyllysine (lysine 517). Residue lysine 523 is modified to N6-acetyllysine. ATP contacts are provided by aspartate 538, arginine 553, and arginine 564. Arginine 623 lines the CoA pocket.

This sequence belongs to the ATP-dependent AMP-binding enzyme family.

The protein resides in the mitochondrion matrix. The catalysed reaction is acetate + ATP + CoA = acetyl-CoA + AMP + diphosphate. It catalyses the reaction propanoate + ATP + CoA = propanoyl-CoA + AMP + diphosphate. It carries out the reaction butanoate + ATP + CoA = butanoyl-CoA + AMP + diphosphate. Catalyzes the synthesis of acetyl-CoA from short-chain fatty acids. Propionate is the preferred substrate but can also utilize acetate and butyrate with a much lower affinity. The sequence is that of Acyl-CoA synthetase short-chain family member 3, mitochondrial (ACSS3) from Bos taurus (Bovine).